The following is a 448-amino-acid chain: Selenide, water dikinase 2 (448 aa).

Ala2 bears the N-acetylalanine mark. Ser46 bears the Phosphoserine mark. Residue Sec60 is part of the active site. Residue Sec60 is a non-standard amino acid, selenocysteine. An ATP-binding site is contributed by Lys63. The disordered stretch occupies residues 85 to 107; that stretch reads LGRGLVGGQEEASQEAGLPAGAG. Ser97 carries the post-translational modification Phosphoserine. ATP is bound by residues 118 to 120, Asp138, Asp161, and 212 to 215; these read GMD and GGQT. Residue Asp120 participates in Mg(2+) binding. Asp161 provides a ligand contact to Mg(2+). Asp316 is a Mg(2+) binding site.

This sequence belongs to the selenophosphate synthase 1 family. Class I subfamily. As to quaternary structure, homodimer. It depends on Mg(2+) as a cofactor. Truncated SEPHS2 proteins produced by failed UGA/Sec decoding are ubiquitinated by the CRL2(KLHDC3) complex, which recognizes the glycine (Gly) at the C-terminus of truncated SEPHS2 proteins.

It catalyses the reaction hydrogenselenide + ATP + H2O = selenophosphate + AMP + phosphate + 2 H(+). Synthesizes selenophosphate from selenide and ATP. The chain is Selenide, water dikinase 2 (SEPHS2) from Homo sapiens (Human).